The sequence spans 178 residues: ATP synthase subunit delta (178 aa).

Belongs to the ATPase delta chain family. F-type ATPases have 2 components, F(1) - the catalytic core - and F(0) - the membrane proton channel. F(1) has five subunits: alpha(3), beta(3), gamma(1), delta(1), epsilon(1). F(0) has three main subunits: a(1), b(2) and c(10-14). The alpha and beta chains form an alternating ring which encloses part of the gamma chain. F(1) is attached to F(0) by a central stalk formed by the gamma and epsilon chains, while a peripheral stalk is formed by the delta and b chains.

The protein resides in the cell inner membrane. Functionally, f(1)F(0) ATP synthase produces ATP from ADP in the presence of a proton or sodium gradient. F-type ATPases consist of two structural domains, F(1) containing the extramembraneous catalytic core and F(0) containing the membrane proton channel, linked together by a central stalk and a peripheral stalk. During catalysis, ATP synthesis in the catalytic domain of F(1) is coupled via a rotary mechanism of the central stalk subunits to proton translocation. In terms of biological role, this protein is part of the stalk that links CF(0) to CF(1). It either transmits conformational changes from CF(0) to CF(1) or is implicated in proton conduction. This is ATP synthase subunit delta from Pseudomonas putida (strain W619).